Reading from the N-terminus, the 456-residue chain is E3 ubiquitin-protein ligase PUB24 (456 aa).

The U-box domain occupies 9–83; that stretch reads EIPNYFICPI…QHWCVENETR (75 aa).

In terms of processing, auto-ubiquitinated.

The catalysed reaction is S-ubiquitinyl-[E2 ubiquitin-conjugating enzyme]-L-cysteine + [acceptor protein]-L-lysine = [E2 ubiquitin-conjugating enzyme]-L-cysteine + N(6)-ubiquitinyl-[acceptor protein]-L-lysine.. It participates in protein modification; protein ubiquitination. Functionally, E3 ubiquitin-protein ligase that acts as a negative regulator of the immunity triggered by the pathogen-associated molecular patterns (PAMPs), in association with PUB22 and PUB23. The sequence is that of E3 ubiquitin-protein ligase PUB24 (PUB24) from Arabidopsis thaliana (Mouse-ear cress).